A 488-amino-acid polypeptide reads, in one-letter code: Glutamyl-tRNA(Gln) amidotransferase subunit A (488 aa).

Active-site charge relay system residues include K77 and S152. S176 acts as the Acyl-ester intermediate in catalysis.

It belongs to the amidase family. GatA subfamily. Heterotrimer of A, B and C subunits.

The catalysed reaction is L-glutamyl-tRNA(Gln) + L-glutamine + ATP + H2O = L-glutaminyl-tRNA(Gln) + L-glutamate + ADP + phosphate + H(+). Allows the formation of correctly charged Gln-tRNA(Gln) through the transamidation of misacylated Glu-tRNA(Gln) in organisms which lack glutaminyl-tRNA synthetase. The reaction takes place in the presence of glutamine and ATP through an activated gamma-phospho-Glu-tRNA(Gln). The sequence is that of Glutamyl-tRNA(Gln) amidotransferase subunit A from Streptococcus pyogenes serotype M28 (strain MGAS6180).